The primary structure comprises 426 residues: MDLRIGGKYRISRKIGGGSFGEIYLGTNISTNEEVAIKLEPAKAIHPQLLFESKLYKIFQGGIGIPAVKWFGFDGDYNIMVMDLLGPSLEDLFNYCGRKFSLKTVLMLGDQMLRRIEFIHSNNFIHRDIKPDNFLMGIGKRGHVVNLIDFGLAKRYRDPKTHQHIPYREHKNLTGTARYASLNTHQGIEQSRRDDLESLGYVLMYFNRGSLPWQGLKAYTKRDKYEKICDKKAQTKIDTLCQGFPSEFATFLNYTRFLKFEDKPDFLYLRKLLREMFVREGYRYDYMFDWVIVRKLREKPPLERPLSNDNKQIQQQIQQQQQAQQQLQQQAQQQQQQTTTTTTTSSSQPSNVKNISTVSNIATTTTDEQFRQLLSTPSYNNVDSDQSPQQTTTTTSSSNPNQTTFYRQNKVVVPQSSSTTTKPPAK.

The region spanning 9 to 278 (YRISRKIGGG…LRKLLREMFV (270 aa)) is the Protein kinase domain. ATP-binding positions include 15 to 23 (IGGGSFGEI) and Lys38. Asp128 acts as the Proton acceptor in catalysis. Disordered regions lie at residues 340-360 (TTTT…TVSN) and 377-426 (PSYN…PPAK). Polar residues predominate over residues 345–360 (SSSQPSNVKNISTVSN). Residues 386-404 (QSPQQTTTTTSSSNPNQTT) show a composition bias toward low complexity. Over residues 414–426 (PQSSSTTTKPPAK) the composition is skewed to polar residues.

It belongs to the protein kinase superfamily. CK1 Ser/Thr protein kinase family. Casein kinase I subfamily. In terms of assembly, monomer. Post-translationally, autophosphorylated.

The protein resides in the cytoplasm. Its subcellular location is the nucleus. The catalysed reaction is L-seryl-[protein] + ATP = O-phospho-L-seryl-[protein] + ADP + H(+). It catalyses the reaction L-threonyl-[protein] + ATP = O-phospho-L-threonyl-[protein] + ADP + H(+). Casein kinases are operationally defined by their preferential utilization of acidic proteins such as caseins as substrates. Can phosphorylate a large number of proteins. May have a role in DNA repair mechanism and support vegetative growth of the cells. This is Casein kinase I (cak1-1) from Dictyostelium discoideum (Social amoeba).